We begin with the raw amino-acid sequence, 58 residues long: Large ribosomal subunit protein eL37 (58 aa).

4 residues coordinate Zn(2+): cysteine 20, cysteine 23, cysteine 35, and cysteine 38. The segment at 20 to 38 adopts a C4-type zinc-finger fold; the sequence is CRRCGEKSYHVKKERCSSC. The interval 39–58 is disordered; sequence GFGDSASRRGYAWQSKSGDN.

This sequence belongs to the eukaryotic ribosomal protein eL37 family. The cofactor is Zn(2+).

Functionally, binds to the 23S rRNA. This Halorubrum lacusprofundi (strain ATCC 49239 / DSM 5036 / JCM 8891 / ACAM 34) protein is Large ribosomal subunit protein eL37.